Consider the following 568-residue polypeptide: Lariat debranching enzyme (568 aa).

The a divalent metal cation site is built by Cys-8, His-10, Asp-39, and Asn-84. Residues 124-154 (SGIFKSHDFKKGHFEFPPYNPETLRSVYHIR) are lariat recognition loop. Positions 174, 226, and 228 each coordinate a divalent metal cation. Residues 388-568 (IYGERGGKGA…TAVEDEESDS (181 aa)) form a disordered region. Polar residues predominate over residues 417–428 (PSDTSGLSSSYN). The segment covering 432 to 444 (ITIEDEWEEEEDG) has biased composition (acidic residues). The span at 467–480 (DSDRDSSPQRETAK) shows a compositional bias: basic and acidic residues. The residue at position 478 (Thr-478) is a Phosphothreonine. A compositionally biased stretch (low complexity) spans 534 to 549 (GETTQSSAGQTGGTPQ). Position 568 is a phosphoserine (Ser-568).

This sequence belongs to the lariat debranching enzyme family. It depends on Fe(2+) as a cofactor. Requires Zn(2+) as cofactor. Mn(2+) serves as cofactor.

It localises to the nucleus. With respect to regulation, active in presence of diverse metals including Fe(2+), Zn(2+), Mn(2+). Also activated by Ca(2+). Binds two metal cations in two adjacent alpha and beta metal-binding pockets. Its function is as follows. Cleaves the 2'-5' phosphodiester linkage at the branch point of excised lariat intron RNA and converts them into linear molecules that can be subsequently degraded, thereby facilitating ribonucleotide turnover. Linked to its role in pre-mRNA processing mechanism, may also participate in retrovirus replication and have an antiviral cell-intrinsic defense function. The polypeptide is Lariat debranching enzyme (dbr1) (Danio rerio (Zebrafish)).